Consider the following 129-residue polypeptide: Glycine cleavage system H protein (129 aa).

The Lipoyl-binding domain maps to 24–106; it reads LLKIGVSEFA…IGEGWLVILK (83 aa). N6-lipoyllysine is present on lysine 65.

The protein belongs to the GcvH family. The glycine cleavage system is composed of four proteins: P, T, L and H. (R)-lipoate serves as cofactor.

The glycine cleavage system catalyzes the degradation of glycine. The H protein shuttles the methylamine group of glycine from the P protein to the T protein. In Prochlorococcus marinus (strain MIT 9215), this protein is Glycine cleavage system H protein.